The following is a 381-amino-acid chain: Guanine nucleotide-binding protein G(olf) subunit alpha (381 aa).

The disordered stretch occupies residues 1 to 25 (MGCLGNSSKTAEDQGVDEKERREAN). Gly2 carries the N-palmitoyl glycine lipid modification. Residue Cys3 is the site of S-palmitoyl cysteine attachment. The span at 10-25 (TAEDQGVDEKERREAN) shows a compositional bias: basic and acidic residues. The G-alpha domain occupies 41-381 (ATHRLLLLGA…RMHLKQYELL (341 aa)). Residues 44–57 (RLLLLGAGESGKST) form a G1 motif region. 6 residues coordinate GTP: Glu52, Ser53, Gly54, Lys55, Ser56, and Thr57. Mg(2+) is bound at residue Ser56. Thr178 is subject to Phosphothreonine. Positions 183–191 (DLLRCRVLT) are G2 motif. The GTP site is built by Leu185, Arg186, and Thr191. Mg(2+)-binding residues include Thr191 and Asp210. The G3 motif stretch occupies residues 206-215 (FHMFDVGGQR). Residues Gly213, Asn279, Lys280, Asp282, and Ala353 each coordinate GTP. The G4 motif stretch occupies residues 275–282 (ILFLNKQD). The G5 motif stretch occupies residues 351-356 (TCAVDT).

It belongs to the G-alpha family. G(s) subfamily. In terms of assembly, g proteins are composed of 3 units; alpha, beta and gamma. The alpha chain contains the guanine nucleotide binding site. Interacts with GAS2L2. Interacts (GDP-bound form) with RIC8B (via C-terminus); promoting GNAL folding and association with the plasma membrane.

Its subcellular location is the cell membrane. It catalyses the reaction GTP + H2O = GDP + phosphate + H(+). Its function is as follows. Guanine nucleotide-binding protein (G protein) involved as transducer in olfactory signal transduction controlled by G protein-coupled receptors (GPCRs). Contains the guanine nucleotide binding site and alternates between an active, GTP-bound state and an inactive, GDP-bound state. Signaling by an activated GPCR promotes GDP release and GTP binding. The alpha subunit has a low GTPase activity that converts bound GTP to GDP, thereby terminating the signal. Both GDP release and GTP hydrolysis are modulated by numerous regulatory proteins. GNAL/G(olf) alpha specifically mediates olfactory signal transduction within the olfactory neuroepithelium and the basal ganglia following GPCRs activation. Acts by promoting the specific activation of adenylyl cyclase ADCY3, resulting in increased levels of the signaling molecule cAMP. The sequence is that of Guanine nucleotide-binding protein G(olf) subunit alpha from Rattus norvegicus (Rat).